We begin with the raw amino-acid sequence, 724 residues long: 1,3-beta-galactosyl-N-acetylhexosamine phosphorylase Cphy3030 (724 aa).

The active-site Proton donor is aspartate 316.

Belongs to the glycoside hydrolase 112 family.

The catalysed reaction is beta-D-galactosyl-(1-&gt;3)-N-acetyl-D-glucosamine + phosphate = alpha-D-galactose 1-phosphate + N-acetyl-D-glucosamine. Reversibly phosphorolyzes beta-D-galactopyranosyl-(1-&gt;3)-N-acetyl-D-glucosamine to form alpha-D-galactopyranose 1-phosphate and acetyl-D-glucosamine. Active towards galacto-N-biose and lacto-N-biose. Does not phosphorolyze galacto-N-tetraose or lacto-N-tetraose. In the reverse reaction has activity toward N-acetyl-D-glucosamine and N-acetyl-D-galactosamine, but not L-rhamnose, D-glucose or D-galactose. This is 1,3-beta-galactosyl-N-acetylhexosamine phosphorylase Cphy3030 from Lachnoclostridium phytofermentans (strain ATCC 700394 / DSM 18823 / ISDg) (Clostridium phytofermentans).